The chain runs to 130 residues: S-protein homolog 22 (130 aa).

Residues 1–21 (MKYFTIFFIFFSLCMFGHVSG) form the signal peptide.

Belongs to the plant self-incompatibility (S1) protein family.

It localises to the secreted. The sequence is that of S-protein homolog 22 from Arabidopsis thaliana (Mouse-ear cress).